A 119-amino-acid chain; its full sequence is Holo-[acyl-carrier-protein] synthase (119 aa).

Mg(2+)-binding residues include aspartate 8 and glutamate 50.

It belongs to the P-Pant transferase superfamily. AcpS family. Mg(2+) is required as a cofactor.

The protein localises to the cytoplasm. The enzyme catalyses apo-[ACP] + CoA = holo-[ACP] + adenosine 3',5'-bisphosphate + H(+). In terms of biological role, transfers the 4'-phosphopantetheine moiety from coenzyme A to a Ser of acyl-carrier-protein. The sequence is that of Holo-[acyl-carrier-protein] synthase from Clavibacter michiganensis subsp. michiganensis (strain NCPPB 382).